We begin with the raw amino-acid sequence, 402 residues long: Clusterin-associated protein 1 (402 aa).

Residues Lys-187–Ser-297 adopt a coiled-coil conformation. Residues Lys-292–Phe-402 are disordered. 2 stretches are compositionally biased toward acidic residues: residues Asp-301–Leu-317 and Asp-349–Ser-377. Ser-303, Ser-313, and Ser-315 each carry phosphoserine. Residue Ser-398 is modified to Phosphoserine.

Belongs to the CLUAP1 family. As to quaternary structure, interacts with CLU/clusterin. Interacts with UBXN10; the interaction is direct.

Its subcellular location is the cell projection. The protein resides in the cilium. It is found in the nucleus. Its function is as follows. Required for cilia biogenesis. Appears to function within the multiple intraflagellar transport complex B (IFT-B). Key regulator of hedgehog signaling. The protein is Clusterin-associated protein 1 (Cluap1) of Rattus norvegicus (Rat).